The following is a 363-amino-acid chain: Heat-inducible transcription repressor HrcA (363 aa).

Belongs to the HrcA family.

Its function is as follows. Negative regulator of class I heat shock genes (grpE-dnaK-dnaJ and groELS operons). Prevents heat-shock induction of these operons. This is Heat-inducible transcription repressor HrcA from Afipia carboxidovorans (strain ATCC 49405 / DSM 1227 / KCTC 32145 / OM5) (Oligotropha carboxidovorans).